The following is an 866-amino-acid chain: E3 ubiquitin-protein ligase RNF216 (866 aa).

3 disordered regions span residues 46 to 117 (LVTP…NPRS), 131 to 161 (YTES…SAAL), and 211 to 240 (EFPG…HPLG). The segment covering 55-76 (EEEDLDDDVILTEDDSEDDYGE) has biased composition (acidic residues). Glycyl lysine isopeptide (Lys-Gly) (interchain with G-Cter in SUMO2) cross-links involve residues Leu-80, Thr-89, and Lys-100. Residues 137 to 156 (LETQNQSSEDSETELLSNLG) show a composition bias toward polar residues. Residues Lys-351 and Lys-354 each participate in a glycyl lysine isopeptide (Lys-Gly) (interchain with G-Cter in SUMO2) cross-link. At Ser-419 the chain carries Phosphoserine. Glycyl lysine isopeptide (Lys-Gly) (interchain with G-Cter in SUMO2) cross-links involve residues Lys-425, Lys-430, Lys-448, Lys-459, and Lys-485. Residues 475–491 (VQQEQEFYEQKIKEMAE) are a coiled coil. Positions 511-728 (QLIECRCCYG…SPGAPCQECS (218 aa)) are TRIAD supradomain. Zn(2+) is bound by residues Cys-515, Cys-518, Cys-537, Cys-540, Cys-605, and Cys-608. The segment at 515–564 (CRCCYGEFPFEELTQCADAHLFCKECLIRYAQEAVFGSGKLELSCMEGSC) adopts an RING-type 1 zinc-finger fold. The IBR-type zinc-finger motif lies at 583–648 (YKYYERKAEE…LWKEHNGLTC (66 aa)). Lys-619 is covalently cross-linked (Glycyl lysine isopeptide (Lys-Gly) (interchain with G-Cter in SUMO2)). 6 residues coordinate Zn(2+): Cys-623, Cys-628, Cys-633, Cys-636, His-643, and Cys-648. Residues Lys-658 and Lys-666 each participate in a glycyl lysine isopeptide (Lys-Gly) (interchain with G-Cter in SUMO2) cross-link. Zn(2+) contacts are provided by Cys-675 and Cys-678. The RING-type 2; atypical zinc finger occupies 675–703 (CHKCGTGLIKSEGCNRMSCRCGAQMCYLC). Cys-688 is a catalytic residue. 5 residues coordinate Zn(2+): Cys-693, Cys-695, Cys-700, Cys-703, and His-716. Position 719 is a phosphoserine; by MAPK1 (Ser-719). Cys-724 is a binding site for Zn(2+). A coiled-coil region spans residues 737–763 (TEDDEKLIEEIQKEAEEEQKRKNGENT). Residues Lys-765 and Lys-773 each participate in a glycyl lysine isopeptide (Lys-Gly) (interchain with G-Cter in SUMO2) cross-link.

Interacts with UBE2L3 and to some extent with UBE2L6. Interacts with TRAF3, TLR3, TLR4, TLR5 and TLR9. Isoform 3/ZIN binds RIPK1. As to quaternary structure, (Microbial infection) Isoform 3/ZIN binds RIPK1 and HIV Vif. In terms of processing, auto-ubiquitinated. Phosphorylation at Ser-719 enhances acceptor ubiquitin binding and chain-type specificity towards 'Lys-63' di-ubiquitin but not di-ubiquitin with other linkage types. Ubiquitous, with the highest levels of expression in testis and peripheral blood leukocytes.

It localises to the cytoplasm. The protein localises to the cytoplasmic vesicle. The protein resides in the clathrin-coated vesicle. It catalyses the reaction S-ubiquitinyl-[E2 ubiquitin-conjugating enzyme]-L-cysteine + [acceptor protein]-L-lysine = [E2 ubiquitin-conjugating enzyme]-L-cysteine + N(6)-ubiquitinyl-[acceptor protein]-L-lysine.. Its pathway is protein modification; protein ubiquitination. Allosterically activated by 'Lys-63'-linked di-ubiquitin. Its function is as follows. E3 ubiquitin ligase which accepts ubiquitin from specific E2 ubiquitin-conjugating enzymes, and then transfers it to substrates promoting their ubiquitination. Plays a role in the regulation of antiviral responses by promoting the degradation of TRAF3, TLR4 and TLR9. In turn, down-regulates NF-kappa-B and IRF3 activation as well as beta interferon production. Also participates in the regulation of autophagy by ubiquitinating BECN1 leading to its degradation and autophagy inhibition. Plays a role in ARC-dependent synaptic plasticity by mediating ARC ubiquitination resulting in its rapid proteasomal degradation. Plays aso an essential role in spermatogenesis and male fertility. Mechanistically, regulates meiosis by promoting the degradation of PRKACB through the ubiquitin-mediated lysosome pathway. Modulates the gonadotropin-releasing hormone signal pathway by affecting the stability of STAU2 that is required for the microtubule-dependent transport of neuronal RNA from the cell body to the dendrite. In terms of biological role, inhibits TNF and IL-1 mediated activation of NF-kappa-B. Promotes TNF and RIP mediated apoptosis. The sequence is that of E3 ubiquitin-protein ligase RNF216 (RNF216) from Homo sapiens (Human).